The following is a 227-amino-acid chain: 2,3-bisphosphoglycerate-dependent phosphoglycerate mutase (227 aa).

Residues 7 to 14 (RHGQSEWN), 20 to 21 (TG), arginine 59, 86 to 89 (ERHY), lysine 97, 113 to 114 (RR), and 182 to 183 (GN) contribute to the substrate site. The active-site Tele-phosphohistidine intermediate is histidine 8. Glutamate 86 serves as the catalytic Proton donor/acceptor.

The protein belongs to the phosphoglycerate mutase family. BPG-dependent PGAM subfamily. As to quaternary structure, homodimer.

The enzyme catalyses (2R)-2-phosphoglycerate = (2R)-3-phosphoglycerate. It participates in carbohydrate degradation; glycolysis; pyruvate from D-glyceraldehyde 3-phosphate: step 3/5. Its function is as follows. Catalyzes the interconversion of 2-phosphoglycerate and 3-phosphoglycerate. This is 2,3-bisphosphoglycerate-dependent phosphoglycerate mutase from Neisseria meningitidis serogroup A / serotype 4A (strain DSM 15465 / Z2491).